We begin with the raw amino-acid sequence, 82 residues long: MDSIVSAASVIAAGLAVGLAAIGPGIGQGSAAANAVEGIARQPEVEGKIRGTLLLSLAFMESLTIYGLVVALSLLFANPYVG.

The next 2 helical transmembrane spans lie at 7–27 (AASV…PGIG) and 57–77 (LAFM…LLFA).

It belongs to the ATPase C chain family. In terms of assembly, F-type ATPases have 2 components, F(1) - the catalytic core - and F(0) - the membrane proton channel. F(1) has five subunits: alpha(3), beta(3), gamma(1), delta(1), epsilon(1). F(0) has four main subunits: a(1), b(1), b'(1) and c(10-14). The alpha and beta chains form an alternating ring which encloses part of the gamma chain. F(1) is attached to F(0) by a central stalk formed by the gamma and epsilon chains, while a peripheral stalk is formed by the delta, b and b' chains.

The protein resides in the plastid. The protein localises to the chloroplast thylakoid membrane. F(1)F(0) ATP synthase produces ATP from ADP in the presence of a proton or sodium gradient. F-type ATPases consist of two structural domains, F(1) containing the extramembraneous catalytic core and F(0) containing the membrane proton channel, linked together by a central stalk and a peripheral stalk. During catalysis, ATP synthesis in the catalytic domain of F(1) is coupled via a rotary mechanism of the central stalk subunits to proton translocation. Functionally, key component of the F(0) channel; it plays a direct role in translocation across the membrane. A homomeric c-ring of between 10-14 subunits forms the central stalk rotor element with the F(1) delta and epsilon subunits. This is ATP synthase subunit c, chloroplastic from Porphyra purpurea (Red seaweed).